The chain runs to 282 residues: Pantothenate synthetase (282 aa).

An ATP-binding site is contributed by 30 to 37; the sequence is MGYLHEGH. Histidine 37 functions as the Proton donor in the catalytic mechanism. Glutamine 61 is a (R)-pantoate binding site. Residue glutamine 61 participates in beta-alanine binding. Residue 147-150 participates in ATP binding; sequence GMKD. Position 153 (glutamine 153) interacts with (R)-pantoate. Residues valine 176 and 184–187 each bind ATP; that span reads KSSR.

This sequence belongs to the pantothenate synthetase family. Homodimer.

The protein localises to the cytoplasm. The enzyme catalyses (R)-pantoate + beta-alanine + ATP = (R)-pantothenate + AMP + diphosphate + H(+). Its pathway is cofactor biosynthesis; (R)-pantothenate biosynthesis; (R)-pantothenate from (R)-pantoate and beta-alanine: step 1/1. Functionally, catalyzes the condensation of pantoate with beta-alanine in an ATP-dependent reaction via a pantoyl-adenylate intermediate. The chain is Pantothenate synthetase from Geobacillus sp. (strain WCH70).